Reading from the N-terminus, the 600-residue chain is Elongation factor 4 (600 aa).

The region spanning 5–187 (KYIRNFSIIA…AIINKLPAPK (183 aa)) is the tr-type G domain. GTP contacts are provided by residues 17–22 (DHGKST) and 134–137 (NKID).

The protein belongs to the TRAFAC class translation factor GTPase superfamily. Classic translation factor GTPase family. LepA subfamily.

Its subcellular location is the cell inner membrane. The catalysed reaction is GTP + H2O = GDP + phosphate + H(+). Its function is as follows. Required for accurate and efficient protein synthesis under certain stress conditions. May act as a fidelity factor of the translation reaction, by catalyzing a one-codon backward translocation of tRNAs on improperly translocated ribosomes. Back-translocation proceeds from a post-translocation (POST) complex to a pre-translocation (PRE) complex, thus giving elongation factor G a second chance to translocate the tRNAs correctly. Binds to ribosomes in a GTP-dependent manner. In Rickettsia prowazekii (strain Madrid E), this protein is Elongation factor 4.